The sequence spans 429 residues: DNA polymerase delta small subunit (429 aa).

Belongs to the DNA polymerase delta/II small subunit family. As to quaternary structure, heterodimer with subunits of 125 kDa and 50 kDa.

It is found in the nucleus. It catalyses the reaction DNA(n) + a 2'-deoxyribonucleoside 5'-triphosphate = DNA(n+1) + diphosphate. The function of the small subunit is not yet clear. The chain is DNA polymerase delta small subunit (POLD2) from Oryza sativa subsp. japonica (Rice).